A 186-amino-acid chain; its full sequence is Ribosome-recycling factor (186 aa).

A disordered region spans residues 135-156 (DANDEVKKLQKDKAVSEDEGKK).

The protein belongs to the RRF family.

The protein localises to the cytoplasm. Functionally, responsible for the release of ribosomes from messenger RNA at the termination of protein biosynthesis. May increase the efficiency of translation by recycling ribosomes from one round of translation to another. This Bdellovibrio bacteriovorus (strain ATCC 15356 / DSM 50701 / NCIMB 9529 / HD100) protein is Ribosome-recycling factor.